A 576-amino-acid chain; its full sequence is G protein-coupled receptor kinase 6 (576 aa).

Residues methionine 1–threonine 185 form an N-terminal region. The region spanning tyrosine 53–leucine 171 is the RGS domain. The Protein kinase domain maps to phenylalanine 186–phenylalanine 448. Residues leucine 192–valine 200, lysine 215, and threonine 264–aspartate 270 each bind ATP. Aspartate 311 functions as the Proton acceptor in the catalytic mechanism. Glutamate 315–leucine 318 contacts ATP. The 66-residue stretch at lysine 449–glutamate 514 folds into the AGC-kinase C-terminal domain. Residue serine 484 is modified to Phosphoserine; by autocatalysis. Phosphothreonine; by autocatalysis is present on threonine 485. S-palmitoyl cysteine attachment occurs at residues cysteine 561, cysteine 562, and cysteine 565. Residues serine 566 and serine 568 each carry the phosphoserine modification.

Belongs to the protein kinase superfamily. AGC Ser/Thr protein kinase family. GPRK subfamily. Interacts with GIT1. As to expression, widely expressed. Detectable in all brain areas examined.

Its subcellular location is the membrane. The catalysed reaction is [G-protein-coupled receptor] + ATP = [G-protein-coupled receptor]-phosphate + ADP + H(+). Its function is as follows. Specifically phosphorylates the activated forms of G protein-coupled receptors. Such receptor phosphorylation initiates beta-arrestin-mediated receptor desensitization, internalization, and signaling events leading to their desensitization. Seems to be involved in the desensitization of D2-like dopamine receptors in striatum and chemokine receptor CXCR4 which is critical for CXCL12-induced cell chemotaxis. Phosphorylates rhodopsin (RHO) (in vitro) and a non G-protein-coupled receptor: LRP6 during Wnt signaling (in vitro). This is G protein-coupled receptor kinase 6 (Grk6) from Rattus norvegicus (Rat).